A 300-amino-acid polypeptide reads, in one-letter code: GTPase Era (300 aa).

The Era-type G domain maps to 5–176 (RSGFVCLIGR…IDVLAAALPP (172 aa)). Residues 13–20 (GRPNTGKS) are G1. Residue 13–20 (GRPNTGKS) participates in GTP binding. Positions 39–43 (QTTRH) are G2. Positions 61 to 64 (DTPG) are G3. Residues 61–65 (DTPGL) and 125–128 (TKID) each bind GTP. The tract at residues 125–128 (TKID) is G4. The G5 stretch occupies residues 155–157 (VSA). In terms of domain architecture, KH type-2 spans 207-286 (VHDELPHSLA…YLDLHVNVAK (80 aa)).

It belongs to the TRAFAC class TrmE-Era-EngA-EngB-Septin-like GTPase superfamily. Era GTPase family. In terms of assembly, monomer.

The protein localises to the cell envelope. It localises to the secreted. The protein resides in the cell wall. In terms of biological role, exhibits GTPase activity. Binds RNA but is probably not involved in ribosome assembly in mycobacteria. This chain is GTPase Era, found in Mycobacterium leprae (strain TN).